Reading from the N-terminus, the 357-residue chain is Undecaprenyl-phosphate alpha-N-acetylglucosaminyl 1-phosphate transferase (357 aa).

Transmembrane regions (helical) follow at residues 40-60, 64-84, 124-144, 183-203, 209-229, 238-258, and 291-311; these read GAIPLIGGVSLFVGNLCFYLL, QMRLPTLYLFSIFVLLVIGMI, FQLTLGSIGLIITVLATIAAI, WSFALIIAILPYFMMNLGIPF, VFMGDAGSTLIGFTIIWILLL, MNPVTALWIIAIPLIDMIAIM, and FLLITFAAAICATIGILGEIF.

Belongs to the glycosyltransferase 4 family. WecA subfamily. It depends on Mg(2+) as a cofactor. Requires Mn(2+) as cofactor.

Its subcellular location is the cell inner membrane. The catalysed reaction is di-trans,octa-cis-undecaprenyl phosphate + UDP-N-acetyl-alpha-D-glucosamine = N-acetyl-alpha-D-glucosaminyl-di-trans,octa-cis-undecaprenyl diphosphate + UMP. It functions in the pathway bacterial outer membrane biogenesis; LPS O-antigen biosynthesis. Functionally, catalyzes the transfer of the GlcNAc-1-phosphate moiety from UDP-GlcNAc onto the carrier lipid undecaprenyl phosphate (C55-P), yielding GlcNAc-pyrophosphoryl-undecaprenyl (GlcNAc-PP-C55). In Pasteurella multocida (strain Pm70), this protein is Undecaprenyl-phosphate alpha-N-acetylglucosaminyl 1-phosphate transferase.